The following is a 409-amino-acid chain: Indian hedgehog protein (409 aa).

A signal peptide spans 1 to 23 (MQLPKVVLLLCAAALLLSGAVRG). The N-palmitoyl cysteine moiety is linked to residue Cys24. 7 residues coordinate Ca(2+): Glu89, Glu90, Asp95, Thr125, Glu126, Asp129, and Asp131. Zn(2+)-binding residues include His140, Asp147, and His182. Gly197 is lipidated: Cholesterol glycine ester.

It belongs to the hedgehog family. As to quaternary structure, multimer. Interacts with BOC and CDON. Interacts with PTCH1. Interacts with glypican GPC3. Post-translationally, cholesterylation is required for N-product targeting to lipid rafts and multimerization. In terms of processing, the C-terminal domain displays an autoproteolysis activity and a cholesterol transferase activity. Both activities result in the cleavage of the full-length protein and covalent attachment of a cholesterol moiety to the C-terminal of the newly generated N-product. The N-product is the active species in both local and long-range signaling, whereas the C-product is degraded in the endoplasmic reticulum. N-palmitoylation by HHAT of N-product is required for indian hedgehog protein N-product multimerization and full activity. As to expression, expressed in the marginal zone at early gastrulation. At stage 14, expression begins in the neural plate with expression becoming more prominent in the anterodorsal area at neural tube closure. At this stage, also expressed diffusely in the somitic and pre-somitic mesoderm. By the early tadpole (stages 28-30), expression is widespread throughout anterior structures with highest levels in the otic vesicle, the eye, and the branchial arches.

It is found in the cell membrane. The protein resides in the endoplasmic reticulum membrane. Its subcellular location is the golgi apparatus membrane. It localises to the secreted. The catalysed reaction is glycyl-L-cysteinyl-[protein] + cholesterol + H(+) = [protein]-C-terminal glycyl cholesterol ester + N-terminal L-cysteinyl-[protein]. Functionally, signal involved in the early induction and patterning of anterodorsal ectoderm, nervous system and somites. Induces ectopic cement gland formation in embryos. It is involved in the regulation of endochondral skeleton formation, and the development of retinal pigment epithelium (RPE), photoreceptors and periocular tissues. Its function is as follows. The C-terminal part of the indian hedgehog protein precursor displays an autoproteolysis and a cholesterol transferase activity. Both activities result in the cleavage of the full-length protein into two parts followed by the covalent attachment of a cholesterol moiety to the C-terminal of the newly generated N-product. Both activities occur in the endoplasmic reticulum. The dually lipidated indian hedgehog protein N-product is a morphogen which is essential for a variety of patterning events during development. Binds to the patched (PTCH1) receptor, which functions in association with smoothened (SMO), to activate the transcription of target genes. Signal involved in the early induction and patterning of anterodorsal ectoderm, nervous system and somites. Induces ectopic cement gland formation in embryos. The chain is Indian hedgehog protein from Xenopus laevis (African clawed frog).